Reading from the N-terminus, the 124-residue chain is MPKSEFFREERKRRVALLGEDAVCKLNGVCGYSCGMPPAVEKVSVPADTEEDVYMLIFPYEQFCGEKHFKLYESLKDVSDDELKLRRLERQRETLLASFQQKLKRYDEKIALLSEKFKNLRSKL.

Positions 1-14 (MPKSEFFREERKRR) are basic motif (BM). Residues 30–68 (CGYSCGMPPAVEKVSVPADTEEDVYMLIFPYEQFCGEKH) form a C-2 region. Residues 72-124 (YESLKDVSDDELKLRRLERQRETLLASFQQKLKRYDEKIALLSEKFKNLRSKL) adopt a coiled-coil conformation. Phosphoserine is present on S79.

Belongs to the virgaviridae suppressor of RNA silencing family. Homooligomer. Post-translationally, phosphorylated at Ser-79 by a host PKA-like kinase; the phosphorylation at this site seems to suppress host cell death.

The protein localises to the host chloroplast envelope. Its subcellular location is the host endoplasmic reticulum. It localises to the host cell junction. It is found in the host plasmodesma. Suppressor of RNA-mediated gene silencing, also known as post-transcriptional gene silencing (PTGS), a mechanism of plant viral defense that limits the accumulation of viral RNAs. Promotes viral cell-to-cell long distance movement. This chain is Suppressor of RNA silencing, found in Peanut clump virus (isolate 87/TGTA2) (PCV).